A 365-amino-acid chain; its full sequence is tRNA dimethylallyltransferase (365 aa).

23-30 (APTASGKT) lines the ATP pocket. A substrate-binding site is contributed by 25 to 30 (TASGKT). 3 interaction with substrate tRNA regions span residues 48–51 (DSAL), 172–176 (QRITR), and 256–261 (RCVGYR).

This sequence belongs to the IPP transferase family. Monomer. The cofactor is Mg(2+).

The enzyme catalyses adenosine(37) in tRNA + dimethylallyl diphosphate = N(6)-dimethylallyladenosine(37) in tRNA + diphosphate. Catalyzes the transfer of a dimethylallyl group onto the adenine at position 37 in tRNAs that read codons beginning with uridine, leading to the formation of N6-(dimethylallyl)adenosine (i(6)A). This Psychrobacter sp. (strain PRwf-1) protein is tRNA dimethylallyltransferase.